Reading from the N-terminus, the 245-residue chain is RNA polymerase sigma factor SigI5 (245 aa).

Positions 60–73 (DEYSIGLMAFNEAI) match the Polymerase core binding motif. The segment at residues 202–221 (MKELSKIIDVHPKTVERNRA) is a DNA-binding region (H-T-H motif).

It belongs to the sigma-70 factor family. SigI subfamily. In terms of assembly, interacts with RsgI5.

The protein resides in the cytoplasm. With respect to regulation, negatively regulated by the anti-sigma-I factor RsgI5. Binding of the polysaccharide substrate to RsgI5 may lead to the release and activation of SigI5. Functionally, sigma factors are initiation factors that promote the attachment of RNA polymerase to specific initiation sites and are then released. This sigma factor is involved in regulation of cellulosomal genes via an external polysaccharide-sensing mechanism. This chain is RNA polymerase sigma factor SigI5, found in Acetivibrio thermocellus (strain ATCC 27405 / DSM 1237 / JCM 9322 / NBRC 103400 / NCIMB 10682 / NRRL B-4536 / VPI 7372) (Clostridium thermocellum).